The chain runs to 701 residues: DNA ligase (701 aa).

Positions 1–21 (MSAKSTPDAGPQEQATEAEAE) are disordered. Residues 50–54 (DADFD), 100–101 (SL), and E130 each bind NAD(+). K132 functions as the N6-AMP-lysine intermediate in the catalytic mechanism. NAD(+) is bound by residues R153, E193, K309, and K333. Zn(2+)-binding residues include C427, C430, C446, and C452. The region spanning 616 to 701 (SIARTLEGLS…LENGPQAPEG (86 aa)) is the BRCT domain.

It belongs to the NAD-dependent DNA ligase family. LigA subfamily. It depends on Mg(2+) as a cofactor. Mn(2+) serves as cofactor.

The enzyme catalyses NAD(+) + (deoxyribonucleotide)n-3'-hydroxyl + 5'-phospho-(deoxyribonucleotide)m = (deoxyribonucleotide)n+m + AMP + beta-nicotinamide D-nucleotide.. DNA ligase that catalyzes the formation of phosphodiester linkages between 5'-phosphoryl and 3'-hydroxyl groups in double-stranded DNA using NAD as a coenzyme and as the energy source for the reaction. It is essential for DNA replication and repair of damaged DNA. In Mycobacterium sp. (strain KMS), this protein is DNA ligase.